A 284-amino-acid polypeptide reads, in one-letter code: Formamidopyrimidine-DNA glycosylase (284 aa).

Pro-2 acts as the Schiff-base intermediate with DNA in catalysis. The active-site Proton donor is the Glu-3. The active-site Proton donor; for beta-elimination activity is the Lys-59. Positions 94 and 113 each coordinate DNA. Residues 239-273 (KVHTKKDQPCSVCNQLIVKKKINGRGSYFCLNCQK) form an FPG-type zinc finger. Arg-263 functions as the Proton donor; for delta-elimination activity in the catalytic mechanism.

Belongs to the FPG family. As to quaternary structure, monomer. The cofactor is Zn(2+).

It catalyses the reaction Hydrolysis of DNA containing ring-opened 7-methylguanine residues, releasing 2,6-diamino-4-hydroxy-5-(N-methyl)formamidopyrimidine.. The enzyme catalyses 2'-deoxyribonucleotide-(2'-deoxyribose 5'-phosphate)-2'-deoxyribonucleotide-DNA = a 3'-end 2'-deoxyribonucleotide-(2,3-dehydro-2,3-deoxyribose 5'-phosphate)-DNA + a 5'-end 5'-phospho-2'-deoxyribonucleoside-DNA + H(+). In terms of biological role, involved in base excision repair of DNA damaged by oxidation or by mutagenic agents. Acts as a DNA glycosylase that recognizes and removes damaged bases. Has a preference for oxidized purines, such as 7,8-dihydro-8-oxoguanine (8-oxoG). Has AP (apurinic/apyrimidinic) lyase activity and introduces nicks in the DNA strand. Cleaves the DNA backbone by beta-delta elimination to generate a single-strand break at the site of the removed base with both 3'- and 5'-phosphates. This chain is Formamidopyrimidine-DNA glycosylase (mutM), found in Mycoplasma genitalium (strain ATCC 33530 / DSM 19775 / NCTC 10195 / G37) (Mycoplasmoides genitalium).